The following is a 284-amino-acid chain: Cystinosin homolog (284 aa).

7 helical membrane-spanning segments follow: residues 3–23, 37–57, 86–106, 116–136, 139–159, 181–201, and 216–236; these read ALSIISIIIGWIYFACWSLSF, IGLSFDFLLFNITGYACYSVF, IAFAIHGFVLTAITIIQCFIY, LGIGIATLIWVSLIVMTILGF, VFTWLWVINYYSYVKLFITFI, NVLLDFSGGVLSLLQMFLDVA, and LGLSLFSIAFDILFIIQHYIL. Residues 4–70 enclose the PQ-loop 1 domain; sequence LSIISIIIGW…LYFDKLVKNE (67 aa). The 55-residue stretch at 154-208 folds into the PQ-loop 2 domain; it reads LFITFIKYIPQAYLNFKNKSTSGWSVHNVLLDFSGGVLSLLQMFLDVADSGNWNI. The interval 247-269 is disordered; it reads NLNDNNIPNNNNNNNNNINNNTP.

Belongs to the cystinosin family.

The protein localises to the lysosome membrane. The enzyme catalyses L-cystine(out) + H(+)(out) = L-cystine(in) + H(+)(in). Cystine/H(+) symporter that mediates export of cystine, the oxidized dimer of cysteine, from lysosomes. The chain is Cystinosin homolog (ctns) from Dictyostelium discoideum (Social amoeba).